A 128-amino-acid chain; its full sequence is Glycine cleavage system H protein (128 aa).

The Lipoyl-binding domain maps to 22 to 104 (VATVGITEHA…YGEGWIFKMK (83 aa)). An N6-lipoyllysine modification is found at K63.

Belongs to the GcvH family. In terms of assembly, the glycine cleavage system is composed of four proteins: P, T, L and H. (R)-lipoate serves as cofactor.

In terms of biological role, the glycine cleavage system catalyzes the degradation of glycine. The H protein shuttles the methylamine group of glycine from the P protein to the T protein. The protein is Glycine cleavage system H protein of Methylacidiphilum infernorum (isolate V4) (Methylokorus infernorum (strain V4)).